The chain runs to 275 residues: Phosphatidylglycerol--prolipoprotein diacylglyceryl transferase (275 aa).

Helical transmembrane passes span 18-38, 55-75, and 89-109; these read IEVH…YFIA, IIFW…VIFQ, and IWHG…TGVI. R137 serves as a coordination point for a 1,2-diacyl-sn-glycero-3-phospho-(1'-sn-glycerol). Helical transmembrane passes span 203–223 and 235–255; these read IGET…FVEG and IRVA…MIIY.

This sequence belongs to the Lgt family.

The protein localises to the cell membrane. It carries out the reaction L-cysteinyl-[prolipoprotein] + a 1,2-diacyl-sn-glycero-3-phospho-(1'-sn-glycerol) = an S-1,2-diacyl-sn-glyceryl-L-cysteinyl-[prolipoprotein] + sn-glycerol 1-phosphate + H(+). Its pathway is protein modification; lipoprotein biosynthesis (diacylglyceryl transfer). Functionally, catalyzes the transfer of the diacylglyceryl group from phosphatidylglycerol to the sulfhydryl group of the N-terminal cysteine of a prolipoprotein, the first step in the formation of mature lipoproteins. This Staphylococcus carnosus (strain TM300) protein is Phosphatidylglycerol--prolipoprotein diacylglyceryl transferase.